The sequence spans 309 residues: E3 ubiquitin-protein ligase SINAT5 (309 aa).

Residues 46–82 (CPVCTNSMYPPIHQCHNGHTLCSTCKSRVHNRCPTCR) form an RING-type zinc finger. An SBD region spans residues 96–289 (VAESLELPCK…KELKLRVTGR (194 aa)). The SIAH-type zinc finger occupies 99–159 (SLELPCKYYN…LVAHLRDDHK (61 aa)). Zn(2+)-binding residues include cysteine 104, cysteine 111, histidine 123, cysteine 127, cysteine 134, cysteine 141, histidine 153, and histidine 158.

Belongs to the SINA (Seven in absentia) family. In terms of assembly, homodimer; homodimerization is essential for its function. Interacts with UBC28 and NAC021/NAC022. Interacts with SINAT6. Interacts with ATG6 and TRAF1A. Interacts with WAV3. Interacts with FREE1. In terms of tissue distribution, expressed at low level in the vascular tissue of mature roots. Expressed in lateral roots and in elongation zone of the main root upon stimulation by auxin. Colocalizes with NAC021/NAC022.

It is found in the nucleus. The protein localises to the cytoplasm. It catalyses the reaction S-ubiquitinyl-[E2 ubiquitin-conjugating enzyme]-L-cysteine + [acceptor protein]-L-lysine = [E2 ubiquitin-conjugating enzyme]-L-cysteine + N(6)-ubiquitinyl-[acceptor protein]-L-lysine.. It participates in protein modification; protein ubiquitination. E3 ubiquitin-protein ligase that mediates ubiquitination and subsequent proteasomal degradation of target proteins. E3 ubiquitin ligases accept ubiquitin from an E2 ubiquitin-conjugating enzyme in the form of a thioester and then directly transfers the ubiquitin to targeted substrates. Mediates the ubiquitination and proteasomal-dependent degradation of NAC021/NAC022, a transcription activator that functions downstream of the auxin signals, thereby acting as a down-regulator of auxin signals. Involved in the formation of lateral roots. Is antagonist to SINAT1, SINAT2, SINAT3 and SINAT4 by suppressing FREE1 ubiquitination and degradation mediated by SINAT1, SINAT2, SINAT3 and SINAT4, and promoting FREE1 accumulation. The polypeptide is E3 ubiquitin-protein ligase SINAT5 (Arabidopsis thaliana (Mouse-ear cress)).